The primary structure comprises 179 residues: Large ribosomal subunit protein uL5 (179 aa).

It belongs to the universal ribosomal protein uL5 family. In terms of assembly, part of the 50S ribosomal subunit; part of the 5S rRNA/L5/L18/L25 subcomplex. Contacts the 5S rRNA and the P site tRNA. Forms a bridge to the 30S subunit in the 70S ribosome.

In terms of biological role, this is one of the proteins that bind and probably mediate the attachment of the 5S RNA into the large ribosomal subunit, where it forms part of the central protuberance. In the 70S ribosome it contacts protein S13 of the 30S subunit (bridge B1b), connecting the 2 subunits; this bridge is implicated in subunit movement. Contacts the P site tRNA; the 5S rRNA and some of its associated proteins might help stabilize positioning of ribosome-bound tRNAs. The protein is Large ribosomal subunit protein uL5 of Variovorax paradoxus (strain S110).